The sequence spans 732 residues: Translation initiation factor eIF2B subunit epsilon (732 aa).

Residues 559–726 (GEEEEDFGVE…QEADEEDSDE (168 aa)) form the W2 domain.

It belongs to the eIF-2B gamma/epsilon subunits family. In terms of assembly, component of the translation initiation factor 2B (eIF2B) complex which is a heterodecamer of two sets of five different subunits: alpha, beta, gamma, delta and epsilon. Subunits alpha, beta and delta comprise a regulatory subcomplex and subunits epsilon and gamma comprise a catalytic subcomplex. Within the complex, the hexameric regulatory complex resides at the center, with the two heterodimeric catalytic subcomplexes bound on opposite sides.

It is found in the cytoplasm. Its subcellular location is the cytosol. In terms of biological role, acts as a component of the translation initiation factor 2B (eIF2B) complex, which catalyzes the exchange of GDP for GTP on the eukaryotic initiation factor 2 (eIF2) complex gamma subunit. Its guanine nucleotide exchange factor activity is repressed when bound to eIF2 complex phosphorylated on the alpha subunit, thereby limiting the amount of methionyl-initiator methionine tRNA available to the ribosome and consequently global translation is repressed. The sequence is that of Translation initiation factor eIF2B subunit epsilon (GCD6) from Candida albicans (strain SC5314 / ATCC MYA-2876) (Yeast).